The sequence spans 369 residues: Anhydro-N-acetylmuramic acid kinase (369 aa).

12–19 (GTSLDGVD) is a binding site for ATP.

Belongs to the anhydro-N-acetylmuramic acid kinase family.

The catalysed reaction is 1,6-anhydro-N-acetyl-beta-muramate + ATP + H2O = N-acetyl-D-muramate 6-phosphate + ADP + H(+). It functions in the pathway amino-sugar metabolism; 1,6-anhydro-N-acetylmuramate degradation. The protein operates within cell wall biogenesis; peptidoglycan recycling. Catalyzes the specific phosphorylation of 1,6-anhydro-N-acetylmuramic acid (anhMurNAc) with the simultaneous cleavage of the 1,6-anhydro ring, generating MurNAc-6-P. Is required for the utilization of anhMurNAc either imported from the medium or derived from its own cell wall murein, and thus plays a role in cell wall recycling. The sequence is that of Anhydro-N-acetylmuramic acid kinase from Actinobacillus pleuropneumoniae serotype 7 (strain AP76).